Consider the following 103-residue polypeptide: Nematocin (103 aa).

The signal sequence occupies residues 1 to 19; that stretch reads MGSSPILLVLAISIGLASA. Cysteine 20 and cysteine 25 are joined by a disulfide. Residue tyrosine 30 is modified to Tyrosine amide. A propeptide spanning residues 31–103 is cleaved from the precursor; the sequence is GRTIRCSSCG…QGGCQTSAMC (73 aa).

This sequence belongs to the vasopressin/oxytocin family. In terms of tissue distribution, detected in thermosensory AFD neurons, neurosecretory NSM cells, AVK interneurons, pharyngeal neuron M5, and the mechanosensory DVA neuron. Detected in male-specific CP motor neurons.

Its subcellular location is the secreted. In terms of biological role, ligand for the G-protein coupled receptor ntr-1. Plays a role in gustatory associative learning. Also plays a role in male mating behavior. The protein is Nematocin of Caenorhabditis elegans.